The sequence spans 102 residues: Small ribosomal subunit protein uS10 (102 aa).

It belongs to the universal ribosomal protein uS10 family. As to quaternary structure, part of the 30S ribosomal subunit.

In terms of biological role, involved in the binding of tRNA to the ribosomes. This chain is Small ribosomal subunit protein uS10, found in Beijerinckia indica subsp. indica (strain ATCC 9039 / DSM 1715 / NCIMB 8712).